Reading from the N-terminus, the 750-residue chain is MADTVENAVSTPDVEQPWAELGLSADEYQRIREILGRRPTGGELAMYSVMWSEHCSYKSSKKYLRRFGDLPQQTPLGPLLAGIGDNAGVVDIGNGLAVTFKAESHNHPSYVEPHQGAATGVGGIVRDIMAMGARPVGVMNALAFGPLDAPDTARVLPGVVSGIADYGNCLGLPTIGGQTLFDPTYYGNPLVNALCVGVLRHEDLQFAKASGVGNLVVLFGAATGGDGIGGASILASESFAAEGESKRPSVQVGDPFMEKLLIECTLDLFNAGVVEALQDFGAAGISCATSELASAGDGGMHVELDRVPLRDPNLAPEEILMSESQERMAAVVRPDQLDRFMEICAHWGVAATVIGEVTDTGRLHIDWQGERIVDVDPRTVAHDGPVLDMPAARPWWIDELNEDDANALPRDNSGEGLAGALLALVGSAQLCDRSWITDQYDRFVRGNTVLAQPNDAGMIRIDDNLGIALSLDANGRQTTLNPYLGAQLALCEAYRNVAVSGATPVAVTDCLNYGSPYDPDVMWQFDETILGLVDGCRELGVPVTGGNVSLHNRTGDESIRPTPLVGVLGVIDDVHRRIPSAFAHDGDAVLLLGTTKCEFGGSVYEDVIHAGHLGGMPPMPDLNAEKALAAVMVEASKRGLLSSAHDLSDGGLAQALVESCLQGGLGVSVSLPEGEPSVMLFSETPARAIVSLCGNGYREFKELCQEHGVPTARIGEVIDHGEIEVNGLFSLPLDEIERAWRKPIPTAMGE.

The active site involves H54. ATP-binding residues include Y57 and K101. E103 serves as a coordination point for Mg(2+). Substrate contacts are provided by residues 104–107 and R126; that span reads SHNH. Catalysis depends on H105, which acts as the Proton acceptor. D127 provides a ligand contact to Mg(2+). Q251 is a substrate binding site. D279 is a Mg(2+) binding site. 323 to 325 serves as a coordination point for substrate; the sequence is ESQ. D509 and G546 together coordinate ATP. Mg(2+) is bound at residue N547. Residue S549 coordinates substrate.

It belongs to the FGAMS family. Monomer. Part of the FGAM synthase complex composed of 1 PurL, 1 PurQ and 2 PurS subunits.

Its subcellular location is the cytoplasm. The catalysed reaction is N(2)-formyl-N(1)-(5-phospho-beta-D-ribosyl)glycinamide + L-glutamine + ATP + H2O = 2-formamido-N(1)-(5-O-phospho-beta-D-ribosyl)acetamidine + L-glutamate + ADP + phosphate + H(+). It functions in the pathway purine metabolism; IMP biosynthesis via de novo pathway; 5-amino-1-(5-phospho-D-ribosyl)imidazole from N(2)-formyl-N(1)-(5-phospho-D-ribosyl)glycinamide: step 1/2. Part of the phosphoribosylformylglycinamidine synthase complex involved in the purines biosynthetic pathway. Catalyzes the ATP-dependent conversion of formylglycinamide ribonucleotide (FGAR) and glutamine to yield formylglycinamidine ribonucleotide (FGAM) and glutamate. The FGAM synthase complex is composed of three subunits. PurQ produces an ammonia molecule by converting glutamine to glutamate. PurL transfers the ammonia molecule to FGAR to form FGAM in an ATP-dependent manner. PurS interacts with PurQ and PurL and is thought to assist in the transfer of the ammonia molecule from PurQ to PurL. In Cutibacterium acnes (strain DSM 16379 / KPA171202) (Propionibacterium acnes), this protein is Phosphoribosylformylglycinamidine synthase subunit PurL.